A 78-amino-acid chain; its full sequence is Acyl carrier protein (78 aa).

Residues 2 to 77 (STIEERVKKI…AAIDYVTSHQ (76 aa)) form the Carrier domain. O-(pantetheine 4'-phosphoryl)serine is present on Ser-37.

The protein belongs to the acyl carrier protein (ACP) family. In terms of processing, 4'-phosphopantetheine is transferred from CoA to a specific serine of apo-ACP by AcpS. This modification is essential for activity because fatty acids are bound in thioester linkage to the sulfhydryl of the prosthetic group.

The protein localises to the cytoplasm. It participates in lipid metabolism; fatty acid biosynthesis. Functionally, carrier of the growing fatty acid chain in fatty acid biosynthesis. This chain is Acyl carrier protein, found in Pseudomonas fluorescens (strain SBW25).